A 424-amino-acid chain; its full sequence is MKVLVVGNGGREHAIAWKVAQSPLVKELYVAKGNAGIWEIAKRVDISPTDVEKLAEFAKNEGVDFTIVGPEAPLVEGIVDEFEKRGLKIFGPNKEAAKLEGSKAFAKTFMKKYGIPTARYEVFTDFEKAKEYVEKVGAPIVVKADGLAAGKGAVVCETVEKAIETLDRFLNKKIFGKSSERVVIEEFLEGEEASYIVMINGDRYVPLPTSQDHKRLLDEDKGPNTGGMGAYSPTPVINEEVEKRIREEIVERVIKGLKEEGIYYRGFLYAGLMITKEGPKVLEFNVRLGDPEAQPILMRVKNDFLETLLNFYEGKDVHIKEDERYALDVVLASRGYPEKPETGKIIHGLDYLKSMEDVVVFHAGTKKEGNFTVTSGGRVLNVCAYGKTLKEAKERAYEAIRYVCFEGMHYRKDIGDKAFKYLSE.

The region spanning 107 to 313 is the ATP-grasp domain; the sequence is KTFMKKYGIP…FLETLLNFYE (207 aa). Residue 133-194 coordinates ATP; it reads VEKVGAPIVV…EEFLEGEEAS (62 aa). Residues Glu-283 and Asn-285 each contribute to the Mg(2+) site.

Belongs to the GARS family. Mg(2+) is required as a cofactor. It depends on Mn(2+) as a cofactor.

It catalyses the reaction 5-phospho-beta-D-ribosylamine + glycine + ATP = N(1)-(5-phospho-beta-D-ribosyl)glycinamide + ADP + phosphate + H(+). The protein operates within purine metabolism; IMP biosynthesis via de novo pathway; N(1)-(5-phospho-D-ribosyl)glycinamide from 5-phospho-alpha-D-ribose 1-diphosphate: step 2/2. The protein is Phosphoribosylamine--glycine ligase of Aquifex aeolicus (strain VF5).